Reading from the N-terminus, the 227-residue chain is Cytochrome c oxidase subunit 2 (227 aa).

The Mitochondrial intermembrane segment spans residues 1 to 14 (MAYPFQLGLQDATS). A helical transmembrane segment spans residues 15–45 (PIMEELLHFHDHALMIVFLISSLVLYIISLM). At 46-59 (LTTKLTHTSTMDAQ) the chain is on the mitochondrial matrix side. The helical transmembrane segment at 60–87 (EVETVWTILPAIILILIALPSLRILYMM) threads the bilayer. Residues 88–227 (DEINNPSLTV…YFETWSALMV (140 aa)) lie on the Mitochondrial intermembrane side of the membrane. Cu cation-binding residues include His161, Cys196, Glu198, Cys200, His204, and Met207. Glu198 is a binding site for Mg(2+). At Tyr218 the chain carries Phosphotyrosine.

It belongs to the cytochrome c oxidase subunit 2 family. As to quaternary structure, component of the cytochrome c oxidase (complex IV, CIV), a multisubunit enzyme composed of 14 subunits. The complex is composed of a catalytic core of 3 subunits MT-CO1, MT-CO2 and MT-CO3, encoded in the mitochondrial DNA, and 11 supernumerary subunits COX4I, COX5A, COX5B, COX6A, COX6B, COX6C, COX7A, COX7B, COX7C, COX8 and NDUFA4, which are encoded in the nuclear genome. The complex exists as a monomer or a dimer and forms supercomplexes (SCs) in the inner mitochondrial membrane with NADH-ubiquinone oxidoreductase (complex I, CI) and ubiquinol-cytochrome c oxidoreductase (cytochrome b-c1 complex, complex III, CIII), resulting in different assemblies (supercomplex SCI(1)III(2)IV(1) and megacomplex MCI(2)III(2)IV(2)). Found in a complex with TMEM177, COA6, COX18, COX20, SCO1 and SCO2. Interacts with TMEM177 in a COX20-dependent manner. Interacts with COX20. Interacts with COX16. Cu cation is required as a cofactor.

It is found in the mitochondrion inner membrane. The enzyme catalyses 4 Fe(II)-[cytochrome c] + O2 + 8 H(+)(in) = 4 Fe(III)-[cytochrome c] + 2 H2O + 4 H(+)(out). Functionally, component of the cytochrome c oxidase, the last enzyme in the mitochondrial electron transport chain which drives oxidative phosphorylation. The respiratory chain contains 3 multisubunit complexes succinate dehydrogenase (complex II, CII), ubiquinol-cytochrome c oxidoreductase (cytochrome b-c1 complex, complex III, CIII) and cytochrome c oxidase (complex IV, CIV), that cooperate to transfer electrons derived from NADH and succinate to molecular oxygen, creating an electrochemical gradient over the inner membrane that drives transmembrane transport and the ATP synthase. Cytochrome c oxidase is the component of the respiratory chain that catalyzes the reduction of oxygen to water. Electrons originating from reduced cytochrome c in the intermembrane space (IMS) are transferred via the dinuclear copper A center (CU(A)) of subunit 2 and heme A of subunit 1 to the active site in subunit 1, a binuclear center (BNC) formed by heme A3 and copper B (CU(B)). The BNC reduces molecular oxygen to 2 water molecules using 4 electrons from cytochrome c in the IMS and 4 protons from the mitochondrial matrix. This is Cytochrome c oxidase subunit 2 (MT-CO2) from Canis aureus (Golden jackal).